Reading from the N-terminus, the 492-residue chain is Replication factor C large subunit (492 aa).

46–53 (GPPGSGKT) contacts ATP. The disordered stretch occupies residues 445-492 (VIPKRPKISDNQISEILTKDNNPKDDVKKASKKPESTSKKQATLDKFF). The span at 461-482 (LTKDNNPKDDVKKASKKPESTS) shows a compositional bias: basic and acidic residues.

It belongs to the activator 1 small subunits family. RfcL subfamily. As to quaternary structure, heteromultimer composed of small subunits (RfcS) and large subunits (RfcL).

In terms of biological role, part of the RFC clamp loader complex which loads the PCNA sliding clamp onto DNA. This chain is Replication factor C large subunit, found in Methanococcus vannielii (strain ATCC 35089 / DSM 1224 / JCM 13029 / OCM 148 / SB).